The sequence spans 142 residues: uncharacterized protein (142 aa).

The interval 1–31 (MSLPKKKKPEVEEEEKPEEEEEKEEEQEIDI) is disordered. A compositionally biased stretch (acidic residues) spans 11-29 (VEEEEKPEEEEEKEEEQEI).

This is an uncharacterized protein from Acidianus sp. F28 (AFV-2).